The primary structure comprises 472 residues: Adenosylhomocysteinase (472 aa).

3 residues coordinate substrate: Thr-62, Asp-137, and Glu-197. 198 to 200 (TTT) is a binding site for NAD(+). Substrate-binding residues include Lys-227 and Asp-231. NAD(+) contacts are provided by residues Asn-232, 261-266 (GYGDVG), Glu-284, Asn-319, 340-342 (IGH), and Asn-385.

Belongs to the adenosylhomocysteinase family. It depends on NAD(+) as a cofactor.

It is found in the cytoplasm. It carries out the reaction S-adenosyl-L-homocysteine + H2O = L-homocysteine + adenosine. Its pathway is amino-acid biosynthesis; L-homocysteine biosynthesis; L-homocysteine from S-adenosyl-L-homocysteine: step 1/1. In terms of biological role, may play a key role in the regulation of the intracellular concentration of adenosylhomocysteine. The sequence is that of Adenosylhomocysteinase from Bordetella bronchiseptica (strain ATCC BAA-588 / NCTC 13252 / RB50) (Alcaligenes bronchisepticus).